A 174-amino-acid chain; its full sequence is Vimentin-type intermediate filament-associated coiled-coil protein (174 aa).

A coiled-coil region spans residues L7–L97. Positions G128–V174 are disordered.

Its subcellular location is the cytoplasm. The sequence is that of Vimentin-type intermediate filament-associated coiled-coil protein (Vmac) from Mus musculus (Mouse).